Reading from the N-terminus, the 122-residue chain is UPF0102 protein CE1920 (122 aa).

It belongs to the UPF0102 family.

The sequence is that of UPF0102 protein CE1920 from Corynebacterium efficiens (strain DSM 44549 / YS-314 / AJ 12310 / JCM 11189 / NBRC 100395).